The following is a 339-amino-acid chain: Protein-arginine kinase (339 aa).

One can recognise a Phosphagen kinase C-terminal domain in the interval 14-242 (IVINSNISLS…LNVISEEKKF (229 aa)). Residues 17-21 (NSNIS), 164-168 (RASVN), and 195-200 (KGLYEE) contribute to the ATP site.

It belongs to the ATP:guanido phosphotransferase family.

The enzyme catalyses L-arginyl-[protein] + ATP = N(omega)-phospho-L-arginyl-[protein] + ADP + H(+). Its function is as follows. Catalyzes the specific phosphorylation of arginine residues in proteins. The chain is Protein-arginine kinase from Clostridium botulinum (strain Eklund 17B / Type B).